Here is a 290-residue protein sequence, read N- to C-terminus: Short chain dehydrogenase andI (290 aa).

Ile-35, Asn-120, Arg-154, Tyr-186, Lys-190, Val-219, and Thr-221 together coordinate NADP(+). Tyr-186 (proton acceptor) is an active-site residue. The Lowers pKa of active site Tyr role is filled by Lys-190.

It belongs to the short-chain dehydrogenases/reductases (SDR) family.

The protein operates within secondary metabolite biosynthesis; terpenoid biosynthesis. Short chain dehydrogenase; part of the gene cluster that mediates the biosynthesis of anditomin, a fungal meroterpenoid. The first step of the pathway is the synthesis of 3,5-dimethylorsellinic acid (DMOA) by the polyketide synthase andM. DMOA is then converted to the phthalide compound 5,7-dihydroxy-4,6-dimethylphthalide (DHDMP) by the cytochrome P450 monooxygenase andK, which is further prenylated by the prenyltransferase andD to yield farnesyl-DHDMP. Further epoxidation by the FAD-dependent monooxygenase andE leads to epoxyfarnesyl-DHDMP. The next step involves the terpene cyclase andB that converts epoxyfarnesyl-DHDMP into preandiloid A through opening of the epoxide ring followed by the cyclization of the farnesyl moiety. Preandiloid A is in turn oxidized at the C-3 hydroxyl group to yield preandiloid B by the dehydrogenase andC. The dioxygenase andA is solely responsible for the dehydrogenation of preandiloid B leading to the enone preandiloid C, as well as for the intriguing structural rearrangement to generate the bicyclo[2.2.2]octane core, transforming preandiloid C into andiconin. FAD-binding monooxygenase andJ then produces andilesin D which is reduced by dehydrogenase andI to yield andilesin A. Action of acetyltransferase andG followed by a spontaneous acetate elimination leads then to andilesin B, which is in turn substrate of the short chain dehydrogenase andH to yield andilesin C. Finally, the dioxygenase andF catalyzes the transformation of andilesin C to anditomin. The protein is Short chain dehydrogenase andI of Emericella variicolor (Aspergillus stellatus).